The following is a 257-amino-acid chain: Phosphonates import ATP-binding protein PhnC (257 aa).

The region spanning 4 to 248 (IEFKDVRKVY…AFNEIYGRSI (245 aa)) is the ABC transporter domain. 37 to 44 (GLSGSGKS) is an ATP binding site.

The protein belongs to the ABC transporter superfamily. Phosphonates importer (TC 3.A.1.9.1) family. The complex is composed of two ATP-binding proteins (PhnC), two transmembrane proteins (PhnE) and a solute-binding protein (PhnD).

It is found in the cell membrane. It catalyses the reaction phosphonate(out) + ATP + H2O = phosphonate(in) + ADP + phosphate + H(+). Part of the ABC transporter complex PhnCDE involved in phosphonates import. Responsible for energy coupling to the transport system. The polypeptide is Phosphonates import ATP-binding protein PhnC (Staphylococcus saprophyticus subsp. saprophyticus (strain ATCC 15305 / DSM 20229 / NCIMB 8711 / NCTC 7292 / S-41)).